Consider the following 150-residue polypeptide: MKALYMVFVLWVLIGCFLSGECHRAPRGQHGPRRTLAPSTHHRHYHLYPLPDPNHVQFGVPPFLPTSSGFCKPHSLSLYAPPFEIVIQPSSIIVTIPGLILTLSSDPSPQRNCPARTPPRVKANIIPGPITAQLLPKLKIPLIILDDSRK.

The signal sequence occupies residues 1-22 (MKALYMVFVLWVLIGCFLSGEC).

The protein resides in the secreted. Its function is as follows. May play a role in protection or detoxification. The polypeptide is Submaxillary gland androgen-regulated protein 2, isoform alpha (Smr2) (Mus musculus (Mouse)).